The following is a 622-amino-acid chain: Sodium-dependent serotonin transporter (622 aa).

The segment at 1–53 is disordered; sequence MDRSGSSDFAGAAATTGRSNPAPWSDDKESPNNEDDSNEDDGDHTTPAKVTDP. At 1–82 the chain is on the cytoplasmic side; it reads MDRSGSSDFA…TRETWGQKAE (82 aa). Over residues 32–42 the composition is skewed to acidic residues; it reads NNEDDSNEDDG. Transmembrane regions (helical) follow at residues 83 to 103, 111 to 130, and 155 to 175; these read FLLAVIGFAVDLGNVWRFPYI, AFLVPYCLFLIFGGLPLFYM, and GVGYAICLIDIYMGMYYNTII. The Na(+) site is built by G89, A91, V92, and N96. At 176–244 the chain is on the extracellular side; it reads GWAVYYLFAS…NGLDFMGPVK (69 aa). A disulfide bond links C195 and C204. N-linked (GlcNAc...) asparagine glycosylation occurs at N211. The next 5 membrane-spanning stretches (helical) occupy residues 245–263, 272–289, 325–342, 354–375, and 408–427; these read PTLALCVFGVFVLVYFSLW, VVWVTALAPYVVLIILLV, IFFSLGPGFGTLLALSSY, LITSSINCLTSFLAGFVIFSVL, and MSGSVFWSIIFFLMLITLGL. S328, N360, L425, D428, and S429 together coordinate Na(+). Transmembrane regions (helical) follow at residues 455 to 473, 489 to 509, 530 to 549, and 568 to 586; these read LFVLLLLAFIFLCALPTMT, GLAILFVVFVEAAGVFWFYGV, ICWTYISPVFLLTIFIFSIM, and VGWAVTCSSVLCIPMYIIY. Topologically, residues 587-622 are cytoplasmic; it reads KFFFASKGGCRQRLQESFQPEDNCGSVVPGQQGTSV.

It belongs to the sodium:neurotransmitter symporter (SNF) (TC 2.A.22) family. Expression is specific to cell bodies in the ventral ganglion of the embryonic and larval nervous system.

The protein localises to the cell membrane. Terminates the action of serotonin by its high affinity sodium-dependent reuptake into presynaptic terminals. The polypeptide is Sodium-dependent serotonin transporter (SerT) (Drosophila melanogaster (Fruit fly)).